The sequence spans 123 residues: MRIQSLLLLGVLLAVGSQLPAAFGRKKGEKSGRCPPDDGPCLLSVPDQCMEDSQCPFTRKCCYRACFRQCVPRISVKLGSCPEDQLQCLSPMNHLCHKDADCSGKKRCCPSACGRDCRDPARG.

Residues 1–24 (MRIQSLLLLGVLLAVGSQLPAAFG) form the signal peptide. WAP domains are found at residues 27-73 (KGEK…CVPR) and 74-121 (ISVK…RDPA). Disulfide bonds link Cys-34–Cys-62, Cys-41–Cys-66, Cys-49–Cys-61, Cys-55–Cys-70, Cys-81–Cys-109, Cys-88–Cys-113, Cys-96–Cys-108, and Cys-102–Cys-117.

It localises to the secreted. In terms of biological role, putative acid-stable proteinase inhibitor. The sequence is that of WAP four-disulfide core domain protein 5 (WFDC5) from Callithrix jacchus (White-tufted-ear marmoset).